The sequence spans 216 residues: ATP phosphoribosyltransferase (216 aa).

Belongs to the ATP phosphoribosyltransferase family. Short subfamily. As to quaternary structure, heteromultimer composed of HisG and HisZ subunits.

The protein resides in the cytoplasm. The catalysed reaction is 1-(5-phospho-beta-D-ribosyl)-ATP + diphosphate = 5-phospho-alpha-D-ribose 1-diphosphate + ATP. Its pathway is amino-acid biosynthesis; L-histidine biosynthesis; L-histidine from 5-phospho-alpha-D-ribose 1-diphosphate: step 1/9. Functionally, catalyzes the condensation of ATP and 5-phosphoribose 1-diphosphate to form N'-(5'-phosphoribosyl)-ATP (PR-ATP). Has a crucial role in the pathway because the rate of histidine biosynthesis seems to be controlled primarily by regulation of HisG enzymatic activity. In Nitrosomonas eutropha (strain DSM 101675 / C91 / Nm57), this protein is ATP phosphoribosyltransferase.